Reading from the N-terminus, the 253-residue chain is LexA repressor (253 aa).

A disordered region spans residues 1-33 (MTSQGRGTRRGGARGNVRAFPENPADAAGLTPR). The segment at residues 54 to 74 (VREIGEAVGLTSTSSVAHQLK) is a DNA-binding region (H-T-H motif). Residues Ser177 and Lys214 each act as for autocatalytic cleavage activity in the active site.

The protein belongs to the peptidase S24 family. In terms of assembly, homodimer.

The enzyme catalyses Hydrolysis of Ala-|-Gly bond in repressor LexA.. Represses a number of genes involved in the response to DNA damage (SOS response), including recA and lexA. In the presence of single-stranded DNA, RecA interacts with LexA causing an autocatalytic cleavage which disrupts the DNA-binding part of LexA, leading to derepression of the SOS regulon and eventually DNA repair. This chain is LexA repressor, found in Frankia alni (strain DSM 45986 / CECT 9034 / ACN14a).